We begin with the raw amino-acid sequence, 288 residues long: Bifunctional protein FolD (288 aa).

Residues 166–168 (GAS) and I232 each bind NADP(+).

Belongs to the tetrahydrofolate dehydrogenase/cyclohydrolase family. As to quaternary structure, homodimer.

It carries out the reaction (6R)-5,10-methylene-5,6,7,8-tetrahydrofolate + NADP(+) = (6R)-5,10-methenyltetrahydrofolate + NADPH. The catalysed reaction is (6R)-5,10-methenyltetrahydrofolate + H2O = (6R)-10-formyltetrahydrofolate + H(+). It participates in one-carbon metabolism; tetrahydrofolate interconversion. Its function is as follows. Catalyzes the oxidation of 5,10-methylenetetrahydrofolate to 5,10-methenyltetrahydrofolate and then the hydrolysis of 5,10-methenyltetrahydrofolate to 10-formyltetrahydrofolate. This Klebsiella pneumoniae (strain 342) protein is Bifunctional protein FolD.